We begin with the raw amino-acid sequence, 341 residues long: Phosphate acyltransferase (341 aa).

The protein belongs to the PlsX family. As to quaternary structure, homodimer. Probably interacts with PlsY.

Its subcellular location is the cytoplasm. The enzyme catalyses a fatty acyl-[ACP] + phosphate = an acyl phosphate + holo-[ACP]. The protein operates within lipid metabolism; phospholipid metabolism. Its function is as follows. Catalyzes the reversible formation of acyl-phosphate (acyl-PO(4)) from acyl-[acyl-carrier-protein] (acyl-ACP). This enzyme utilizes acyl-ACP as fatty acyl donor, but not acyl-CoA. In Vibrio vulnificus (strain CMCP6), this protein is Phosphate acyltransferase.